Consider the following 569-residue polypeptide: Urease subunit alpha (569 aa).

The 439-residue stretch at 131–569 (GSIDTHIHFI…VPMAQRYFLL (439 aa)) folds into the Urease domain. Ni(2+)-binding residues include H136, H138, and K219. The residue at position 219 (K219) is an N6-carboxylysine. Substrate is bound at residue H221. 2 residues coordinate Ni(2+): H248 and H274. H322 serves as the catalytic Proton donor. Residue D362 coordinates Ni(2+).

It belongs to the metallo-dependent hydrolases superfamily. Urease alpha subunit family. As to quaternary structure, heterotrimer of UreA (gamma), UreB (beta) and UreC (alpha) subunits. Three heterotrimers associate to form the active enzyme. Requires Ni cation as cofactor. Carboxylation allows a single lysine to coordinate two nickel ions.

The protein resides in the cytoplasm. The enzyme catalyses urea + 2 H2O + H(+) = hydrogencarbonate + 2 NH4(+). Its pathway is nitrogen metabolism; urea degradation; CO(2) and NH(3) from urea (urease route): step 1/1. The chain is Urease subunit alpha from Prochlorococcus marinus (strain MIT 9215).